Here is a 695-residue protein sequence, read N- to C-terminus: UvrABC system protein B (695 aa).

Residues 31 to 414 (EGIESGLSFQ…EIQRSGQIAE (384 aa)) enclose the Helicase ATP-binding domain. An ATP-binding site is contributed by 44–51 (GVTGSGKT). The short motif at 97 to 120 (YYDYYQPEAYVPSRDLFIEKDSSI) is the Beta-hairpin element. In terms of domain architecture, Helicase C-terminal spans 435–601 (QVDDLMSEVS…GVNKRIKDLI (167 aa)). The region spanning 632–667 (AKEIQRLEKSMLEAARNMEFEQAAQYRDEIKNLRSK) is the UVR domain.

Belongs to the UvrB family. In terms of assembly, forms a heterotetramer with UvrA during the search for lesions. Interacts with UvrC in an incision complex.

The protein resides in the cytoplasm. Functionally, the UvrABC repair system catalyzes the recognition and processing of DNA lesions. A damage recognition complex composed of 2 UvrA and 2 UvrB subunits scans DNA for abnormalities. Upon binding of the UvrA(2)B(2) complex to a putative damaged site, the DNA wraps around one UvrB monomer. DNA wrap is dependent on ATP binding by UvrB and probably causes local melting of the DNA helix, facilitating insertion of UvrB beta-hairpin between the DNA strands. Then UvrB probes one DNA strand for the presence of a lesion. If a lesion is found the UvrA subunits dissociate and the UvrB-DNA preincision complex is formed. This complex is subsequently bound by UvrC and the second UvrB is released. If no lesion is found, the DNA wraps around the other UvrB subunit that will check the other stand for damage. The chain is UvrABC system protein B from Nitrosomonas europaea (strain ATCC 19718 / CIP 103999 / KCTC 2705 / NBRC 14298).